A 355-amino-acid polypeptide reads, in one-letter code: G protein alpha i subunit (355 aa).

G2 carries N-myristoyl glycine lipidation. The S-palmitoyl cysteine moiety is linked to residue C3. The G-alpha domain occupies 33-355 (SEVKLLLLGA…KNNLKQIGLF (323 aa)). The tract at residues 36-49 (KLLLLGAGESGKST) is G1 motif. GTP contacts are provided by residues 41-48 (GAGESGKS), 176-182 (LRTRVKT), 201-205 (DVGGQ), 270-273 (NKKD), and A327. Mg(2+)-binding residues include S48 and T182. Residues 174-182 (DVLRTRVKT) are G2 motif. The tract at residues 197–206 (FKLFDVGGQR) is G3 motif. The interval 266–273 (ILFLNKKD) is G4 motif. Positions 325 to 330 (TCATDT) are G5 motif.

This sequence belongs to the G-alpha family. G(i/o/t/z) subfamily. G proteins are composed of 3 units; alpha, beta and gamma. The alpha chain contains the guanine nucleotide binding site. Interacts (via GDP- or GTP-bound forms) with loco (via GoLoco and RGS domains). Interacts with raps/pins.

The protein resides in the cell membrane. It is found in the apical cell membrane. Its function is as follows. Guanine nucleotide-binding proteins (G proteins) are involved as modulators or transducers in various transmembrane signaling systems. Plays a role in glial cell differentiation during embryogenesis; loco, Galphao and the G-protein coupled receptor, moody, are required in the surface glia to achieve effective insulation of the nerve cord. This Drosophila melanogaster (Fruit fly) protein is G protein alpha i subunit (Galphai).